A 429-amino-acid chain; its full sequence is Prenyltransferase okaC (429 aa).

Positions 101, 189, 191, 257, 259, 342, 406, and 410 each coordinate dimethylallyl diphosphate.

It belongs to the tryptophan dimethylallyltransferase family.

The catalysed reaction is cyclo(L-Trp-L-Trp) + 2 dimethylallyl diphosphate = cyclo(N(8)-(alpha,alpha-dimethylallyl)-L-Trp-6a-(alpha,alpha-dimethylallyl)-L-Trp) + 2 diphosphate. Its pathway is alkaloid biosynthesis. Its function is as follows. Prenyltransferase; part of the gene cluster that mediates the biosynthesis of okaramine B, a prenylated indole alkaloid that possesses an unusual octacyclic ring system, including a four-membered azetidine ring and an eight-membered azocine ring, and that exhibits insecticidal activity against silkworm larvae. Within the pathway, okaC performs asymmetric reverse prenylation of cyclo(L-Trp-L-Trp) at N-1 and C-2' of the indole ring to produce the cyclic prenylated tryptophan dimer cyclo(N8-(alpha,alpha-dimethylallyl)-L-Trp-6a-(alpha,alpha-dime-thylallyl)-L-Trp). The biosynthesis begins with the NRPS okaA that condenses two tryptophan molecules into cyclo(L-Trp-L-Trp). Prenylation by the prenyltransferase okaC then leads to the formation of cyclo(N8-(alpha,alpha-dimethylallyl)-L-Trp-6a-(alpha,alpha-dime-thylallyl)-L-Trp). This is followed by indole 2,3-epoxidation by the FAD-dependent monooxygenase okaB to facilitate the formation of the hexahydropyrrolo[2,3-b]indole (HPI) moiety of okaramine C. The cytochrome P450 monooxygenase okaD then likely catalyzes formation of the eight-membered ring of okaramine A. The dioxygenase okaE further forms the unusual 2-dimethyl-3-methyl-azetidine ring to yield 12-deshydroxyl okaramine E, as well as the hydroxylation of 12-deshydroxyl okaramine E to produce okaramine E. The cytochrome P450 monoxygenase okaG converts 12-deshydroxyl okaramine E into 3-desmethyl okaramine B which is further methylated by the methyltransferase okaF into okaramine B. In a shunt pathway, okaG and okaF together are also able to convert okaramine E into okaramine D. Okaramine H is produced by nonenzymatic conversion from okaramine A. The sequence is that of Prenyltransferase okaC from Penicillium ochrochloron.